The following is a 941-amino-acid chain: Endoglucanase (941 aa).

An N-terminal signal peptide occupies residues 1 to 29 (MKIKQIKQSLSLLLIITLIMSLFVPMASA). 3 SLH domains span residues 37-94 (NAFP…GLEA), 95-158 (SSKD…LSLP), and 161-224 (QREY…DYLY). The Proton donor role is filled by glutamate 373. The active-site Nucleophile is the glutamate 485.

The protein belongs to the glycosyl hydrolase 5 (cellulase A) family.

The catalysed reaction is Endohydrolysis of (1-&gt;4)-beta-D-glucosidic linkages in cellulose, lichenin and cereal beta-D-glucans.. This Bacillus sp. (strain KSM-635) protein is Endoglucanase.